A 249-amino-acid chain; its full sequence is Tryptophan synthase alpha chain (249 aa).

Active-site proton acceptor residues include Glu43 and Asp54.

Belongs to the TrpA family. As to quaternary structure, tetramer of two alpha and two beta chains.

The catalysed reaction is (1S,2R)-1-C-(indol-3-yl)glycerol 3-phosphate + L-serine = D-glyceraldehyde 3-phosphate + L-tryptophan + H2O. It participates in amino-acid biosynthesis; L-tryptophan biosynthesis; L-tryptophan from chorismate: step 5/5. The alpha subunit is responsible for the aldol cleavage of indoleglycerol phosphate to indole and glyceraldehyde 3-phosphate. This Campylobacter jejuni subsp. doylei (strain ATCC BAA-1458 / RM4099 / 269.97) protein is Tryptophan synthase alpha chain.